The chain runs to 1093 residues: MPAAGSNEPDGVLSYQRPDEEAVVDQGGTSTILNIHYEKEELEGHRTLYVGVRMPLGRQSHRHHRTHGQKHRRRGRGKGASQGEEGLEALAHDTPSQRVQFILGTEEDEEHVPHELFTELDEICMKEGEDAEWKETARWLKFEEDVEDGGERWSKPYVATLSLHSLFELRSCLINGTVLLDMHANSIEEISDLILDQQELSSDLNDSMRVKVREALLKKHHHQNEKKRNNLIPIVRSFAEVGKKQSDPHLMDKHGQTVSPQSVPTTNLEVKNGVNCEHSPVDLSKVDLHFMKKIPTGAEASNVLVGEVDILDRPIVAFVRLSPAVLLSGLTEVPIPTRFLFILLGPVGKGQQYHEIGRSMATIMTDEIFHDVAYKAKERDDLLAGIDEFLDQVTVLPPGEWDPSIRIEPPKNVPSQEKRKMPGVPNGNVCHIEQEPHGGHSGPELQRTGRLFGGLVLDIKRKAPWYWSDYRDALSLQCLASFLFLYCACMSPVITFGGLLGEATEGRISAIESLFGASMTGIAYSLFAGQALTILGSTGPVLVFEKILFKFCKDYALSYLSLRACIGLWTAFLCIVLVATDASSLVCYITRFTEEAFASLICIIFIYEAIEKLIHLAETYPIHMHSQLDHLSLYYCRCTLPENPNNHTLQYWKDHNIVTAEVHWANLTVSECQEMHGEFMGSACGHHGPYTPDVLFWSCILFFTTFILSSTLKTFKTSRYFPTRVRSMVSDFAVFLTIFTMVIIDFLIGVPSPKLQVPSVFKPTRDDRGWIINPIGPNPWWTVIAAIIPALLCTILIFMDQQITAVIINRKEHKLKKGCGYHLDLLMVAIMLGVCSIMGLPWFVAATVLSITHVNSLKLESECSAPGEQPKFLGIREQRVTGLMIFVLMGCSVFMTAILKFIPMPVLYGVFLYMGVSSLQGIQFFDRLKLFGMPAKHQPDFIYLRHVPLRKVHLFTLIQLTCLVLLWVIKASPAAIVFPMMVLALVFVRKVMDLCFSKRELSWLDDLMPESKKKKLDDAKKKAKEEEEAEKMLEIGGDKFPLESRKLLSSPGKNISCRCDPSEINISDEMPKTTVWKALSMNSGNAKEKSLFN.

2 disordered regions span residues 1 to 25 and 55 to 95; these read MPAAGSNEPDGVLSYQRPDEEAVVD and PLGR…HDTP. Residues 1–478 lie on the Extracellular side of the membrane; it reads MPAAGSNEPD…DYRDALSLQC (478 aa). Positions 59–77 are enriched in basic residues; that stretch reads QSHRHHRTHGQKHRRRGRG. 2 residues coordinate Zn(2+): F167 and L169. The short motif at 340-344 is the VTVLP; mediates dimerization element; that stretch reads LFILL. Residues 479–499 traverse the membrane as a helical segment; that stretch reads LASFLFLYCACMSPVITFGGL. Residues 500-523 lie on the Cytoplasmic side of the membrane; the sequence is LGEATEGRISAIESLFGASMTGIA. The chain crosses the membrane as a helical span at residues 524-544; the sequence is YSLFAGQALTILGSTGPVLVF. The Extracellular portion of the chain corresponds to 545 to 565; it reads EKILFKFCKDYALSYLSLRAC. Residues 566-586 form a helical membrane-spanning segment; it reads IGLWTAFLCIVLVATDASSLV. Topologically, residues 587-595 are cytoplasmic; it reads CYITRFTEE. The helical transmembrane segment at 596-616 threads the bilayer; sequence AFASLICIIFIYEAIEKLIHL. The Extracellular portion of the chain corresponds to 617–687; sequence AETYPIHMHS…EFMGSACGHH (71 aa). Disulfide bonds link C636–C684 and C638–C672. N646 is a glycosylation site (N-linked (GlcNAc) asparagine). The chain crosses the membrane as a helical span at residues 688-708; it reads GPYTPDVLFWSCILFFTTFIL. The Cytoplasmic portion of the chain corresponds to 709–731; it reads SSTLKTFKTSRYFPTRVRSMVSD. The helical transmembrane segment at 732–752 threads the bilayer; that stretch reads FAVFLTIFTMVIIDFLIGVPS. The Extracellular segment spans residues 753–778; that stretch reads PKLQVPSVFKPTRDDRGWIINPIGPN. Residues 779–799 traverse the membrane as a helical segment; it reads PWWTVIAAIIPALLCTILIFM. At 800–824 the chain is on the cytoplasmic side; that stretch reads DQQITAVIINRKEHKLKKGCGYHLD. A helical transmembrane segment spans residues 825-845; the sequence is LLMVAIMLGVCSIMGLPWFVA. Topologically, residues 846-881 are extracellular; it reads ATVLSITHVNSLKLESECSAPGEQPKFLGIREQRVT. The chain crosses the membrane as a helical span at residues 882 to 902; that stretch reads GLMIFVLMGCSVFMTAILKFI. The Cytoplasmic segment spans residues 903–904; sequence PM. The chain crosses the membrane as a helical span at residues 905 to 925; that stretch reads PVLYGVFLYMGVSSLQGIQFF. The Extracellular portion of the chain corresponds to 926–962; that stretch reads DRLKLFGMPAKHQPDFIYLRHVPLRKVHLFTLIQLTC. The chain crosses the membrane as a helical span at residues 963–983; sequence LVLLWVIKASPAAIVFPMMVL. Over 984 to 1093 the chain is Cytoplasmic; the sequence is ALVFVRKVMD…GNAKEKSLFN (110 aa). The stretch at 1010–1036 forms a coiled coil; sequence ESKKKKLDDAKKKAKEEEEAEKMLEIG.

This sequence belongs to the anion exchanger (TC 2.A.31) family. As to quaternary structure, homodimer. In terms of tissue distribution, expressed in the pyramidal cells of the hippocampus (at protein level). Highly expressed in all major regions of the brain, spinal column and in testis, and moderate levels in trachea, thyroid and medulla region of kidney. Low expression levels observed in pancreas and kidney cortex. Expressed in the brain. As to expression, expressed in the brain, heart and kidney.

It is found in the apical cell membrane. It localises to the basolateral cell membrane. The protein localises to the cytoplasmic vesicle. The protein resides in the secretory vesicle. Its subcellular location is the synaptic vesicle membrane. It is found in the cell membrane. It carries out the reaction 2 hydrogencarbonate(out) + chloride(in) + Na(+)(out) = 2 hydrogencarbonate(in) + chloride(out) + Na(+)(in). With respect to regulation, activity is inhibited by 4,4'-Di-isothiocyanatostilbene-2,2'-disulfonic acid (DIDS - an inhibitor of several anion channels and transporters). Activity is inhibited by 4,4'-Di-isothiocyanatostilbene-2,2'-disulfonic acid (DIDS - an inhibitor of several anion channels and transporters). Zinc-binding negatively regulates its activity. Mediates electroneutral sodium- and carbonate-dependent chloride-HCO3(-) exchange with a Na(+):HCO3(-) stoichiometry of 2:1. Plays a major role in pH regulation in neurons. Mediates sodium reabsorption in the renal cortical collecting ducts. The protein is Electroneutral sodium bicarbonate exchanger 1 of Homo sapiens (Human).